Reading from the N-terminus, the 294-residue chain is Eukaryotic translation initiation factor 3 subunit G (294 aa).

The segment covering 1–22 (MQTFHHQDTGSEDFRQNTMDEK) has biased composition (basic and acidic residues). Disordered stretches follow at residues 1–42 (MQTF…DGTK) and 164–211 (GGMG…SDDD). The span at 30–42 (STPQITQNADGTK) shows a compositional bias: polar residues. Positions 193–205 (GPGGPGGPGGAAG) are enriched in gly residues. One can recognise an RRM domain in the interval 214–292 (LTLRVTNLSE…LIMKVDYSKK (79 aa)).

The protein belongs to the eIF-3 subunit G family. Component of the eukaryotic translation initiation factor 3 (eIF-3) complex.

The protein localises to the cytoplasm. Its function is as follows. RNA-binding component of the eukaryotic translation initiation factor 3 (eIF-3) complex, which is involved in protein synthesis of a specialized repertoire of mRNAs and, together with other initiation factors, stimulates binding of mRNA and methionyl-tRNAi to the 40S ribosome. The eIF-3 complex specifically targets and initiates translation of a subset of mRNAs involved in cell proliferation. This subunit can bind 18S rRNA. This chain is Eukaryotic translation initiation factor 3 subunit G, found in Yarrowia lipolytica (strain CLIB 122 / E 150) (Yeast).